We begin with the raw amino-acid sequence, 237 residues long: Ribosomal RNA small subunit methyltransferase G (237 aa).

Residues G78, F83, 129–130, and R148 contribute to the S-adenosyl-L-methionine site; that span reads AE.

The protein belongs to the methyltransferase superfamily. RNA methyltransferase RsmG family.

It is found in the cytoplasm. Its function is as follows. Specifically methylates the N7 position of a guanine in 16S rRNA. This is Ribosomal RNA small subunit methyltransferase G from Streptococcus thermophilus (strain ATCC BAA-491 / LMD-9).